The sequence spans 522 residues: Peptide methionine sulfoxide reductase MsrA/MsrB (522 aa).

Positions 17–174 (LALGACSPKI…ALALIRDPNA (158 aa)) constitute a Thioredoxin domain. Residues Cys-68 and Cys-71 are joined by a disulfide bond. Residues 199–354 (RTIYLAGGCF…PNGYCHIDIR (156 aa)) are peptide methionine sulfoxide reductase A. Residue Cys-207 is part of the active site. Residues 383–506 (DAELKRTLTE…NGASLKFIPL (124 aa)) form the MsrB domain. A disulfide bridge links Cys-440 with Cys-495. Cys-495 functions as the Nucleophile in the catalytic mechanism.

This sequence in the N-terminal section; belongs to the thioredoxin family. It in the central section; belongs to the MsrA Met sulfoxide reductase family. In the C-terminal section; belongs to the MsrB Met sulfoxide reductase family.

It carries out the reaction L-methionyl-[protein] + [thioredoxin]-disulfide + H2O = L-methionyl-(S)-S-oxide-[protein] + [thioredoxin]-dithiol. The catalysed reaction is [thioredoxin]-disulfide + L-methionine + H2O = L-methionine (S)-S-oxide + [thioredoxin]-dithiol. The enzyme catalyses L-methionyl-[protein] + [thioredoxin]-disulfide + H2O = L-methionyl-(R)-S-oxide-[protein] + [thioredoxin]-dithiol. Functionally, has an important function as a repair enzyme for proteins that have been inactivated by oxidation. Catalyzes the reversible oxidation-reduction of methionine sulfoxide in proteins to methionine. This is Peptide methionine sulfoxide reductase MsrA/MsrB (msrAB) from Neisseria meningitidis serogroup A / serotype 4A (strain DSM 15465 / Z2491).